Consider the following 314-residue polypeptide: Thymidylate synthase (314 aa).

Residues Arg21 and 176 to 177 (RR) each bind dUMP. Catalysis depends on Cys196, which acts as the Nucleophile. Residues 216-219 (RSAD), Asn227, and 257-259 (HLY) contribute to the dUMP site. Asp219 is a (6R)-5,10-methylene-5,6,7,8-tetrahydrofolate binding site. Ser313 is a (6R)-5,10-methylene-5,6,7,8-tetrahydrofolate binding site.

This sequence belongs to the thymidylate synthase family. Bacterial-type ThyA subfamily. As to quaternary structure, homodimer.

The protein localises to the cytoplasm. It carries out the reaction dUMP + (6R)-5,10-methylene-5,6,7,8-tetrahydrofolate = 7,8-dihydrofolate + dTMP. It functions in the pathway pyrimidine metabolism; dTTP biosynthesis. Its function is as follows. Catalyzes the reductive methylation of 2'-deoxyuridine-5'-monophosphate (dUMP) to 2'-deoxythymidine-5'-monophosphate (dTMP) while utilizing 5,10-methylenetetrahydrofolate (mTHF) as the methyl donor and reductant in the reaction, yielding dihydrofolate (DHF) as a by-product. This enzymatic reaction provides an intracellular de novo source of dTMP, an essential precursor for DNA biosynthesis. This is Thymidylate synthase from Listeria innocua serovar 6a (strain ATCC BAA-680 / CLIP 11262).